The primary structure comprises 269 residues: UPF0329 protein ECU04_1660 (269 aa).

The segment covering 1-12 (MEERERGKEKGS) has biased composition (basic and acidic residues). Residues 1–74 (MEERERGKEK…SPKEKSKGEE (74 aa)) form a disordered region. The segment covering 13 to 23 (KGKGRKKRGKK) has biased composition (basic residues). The segment covering 24-36 (GAGEAKEESKEED) has biased composition (basic and acidic residues). Over residues 37–51 (RGEEEEESVEADVPV) the composition is skewed to acidic residues.

It belongs to the UPF0329 family.

The polypeptide is UPF0329 protein ECU04_1660 (Encephalitozoon cuniculi (strain GB-M1) (Microsporidian parasite)).